A 162-amino-acid chain; its full sequence is MFDINWGSIIYQLIAFCVLLWLLSKFALKPLMGVMEKREQMINDQIDQADKDRKAAQEYLEQQRLAVEKAREEAQEIVQKAKKLSEQQGQEIVEAARAEGERLKEAALAEIQREKEQAVASLREQVASLSVLIATKVIEKELDEKEQEKLIAEYLKEVGEEL.

The chain crosses the membrane as a helical span at residues 4 to 24 (INWGSIIYQLIAFCVLLWLLS).

It belongs to the ATPase B chain family. In terms of assembly, F-type ATPases have 2 components, F(1) - the catalytic core - and F(0) - the membrane proton channel. F(1) has five subunits: alpha(3), beta(3), gamma(1), delta(1), epsilon(1). F(0) has three main subunits: a(1), b(2) and c(10-14). The alpha and beta chains form an alternating ring which encloses part of the gamma chain. F(1) is attached to F(0) by a central stalk formed by the gamma and epsilon chains, while a peripheral stalk is formed by the delta and b chains.

The protein resides in the cell membrane. F(1)F(0) ATP synthase produces ATP from ADP in the presence of a proton or sodium gradient. F-type ATPases consist of two structural domains, F(1) containing the extramembraneous catalytic core and F(0) containing the membrane proton channel, linked together by a central stalk and a peripheral stalk. During catalysis, ATP synthesis in the catalytic domain of F(1) is coupled via a rotary mechanism of the central stalk subunits to proton translocation. Its function is as follows. Component of the F(0) channel, it forms part of the peripheral stalk, linking F(1) to F(0). The sequence is that of ATP synthase subunit b from Halalkalibacterium halodurans (strain ATCC BAA-125 / DSM 18197 / FERM 7344 / JCM 9153 / C-125) (Bacillus halodurans).